The sequence spans 61 residues: UPF0434 protein PSPA7_2181 (61 aa).

It belongs to the UPF0434 family.

The polypeptide is UPF0434 protein PSPA7_2181 (Pseudomonas paraeruginosa (strain DSM 24068 / PA7) (Pseudomonas aeruginosa (strain PA7))).